We begin with the raw amino-acid sequence, 148 residues long: 3-dehydroquinate dehydratase (148 aa).

Residue Y23 is the Proton acceptor of the active site. Substrate-binding residues include N75, H81, and D88. H101 acts as the Proton donor in catalysis. Substrate-binding positions include 102-103 (LS) and R112.

Belongs to the type-II 3-dehydroquinase family. In terms of assembly, homododecamer.

The catalysed reaction is 3-dehydroquinate = 3-dehydroshikimate + H2O. Its pathway is metabolic intermediate biosynthesis; chorismate biosynthesis; chorismate from D-erythrose 4-phosphate and phosphoenolpyruvate: step 3/7. In terms of biological role, catalyzes a trans-dehydration via an enolate intermediate. This Xanthomonas campestris pv. campestris (strain B100) protein is 3-dehydroquinate dehydratase.